The chain runs to 143 residues: Putative pre-16S rRNA nuclease (143 aa).

The protein belongs to the YqgF nuclease family.

The protein localises to the cytoplasm. Could be a nuclease involved in processing of the 5'-end of pre-16S rRNA. The sequence is that of Putative pre-16S rRNA nuclease from Mesomycoplasma hyopneumoniae (strain 232) (Mycoplasma hyopneumoniae).